The sequence spans 557 residues: Probable asparagine synthetase [glutamine-hydrolyzing] (557 aa).

The active-site For GATase activity is the Cys-2. One can recognise a Glutamine amidotransferase type-2 domain in the interval 2 to 188; the sequence is CGILAVHHVA…PGHYYDSETK (187 aa). Residues 50 to 54, 75 to 77, and Asp-99 each bind L-glutamine; these read RLAIV and NGE. Residues 196–531 enclose the Asparagine synthetase domain; the sequence is PSWWDENKIP…PRQCADTVMR (336 aa). ATP-binding positions include Leu-235, Ile-280, and 354–355; that span reads SG. Residues Ser-391 and Ser-489 each carry the phosphoserine modification.

It localises to the cytoplasm. Its subcellular location is the nucleus. It carries out the reaction L-aspartate + L-glutamine + ATP + H2O = L-asparagine + L-glutamate + AMP + diphosphate + H(+). Its pathway is amino-acid biosynthesis; L-asparagine biosynthesis; L-asparagine from L-aspartate (L-Gln route): step 1/1. In Schizosaccharomyces pombe (strain 972 / ATCC 24843) (Fission yeast), this protein is Probable asparagine synthetase [glutamine-hydrolyzing] (asn1).